The primary structure comprises 438 residues: Serine--tRNA ligase (438 aa).

245–247 (TAE) contributes to the L-serine binding site. 276 to 278 (RSE) is a binding site for ATP. Glutamate 299 contributes to the L-serine binding site. 363-366 (EISS) lines the ATP pocket. Serine 398 provides a ligand contact to L-serine.

It belongs to the class-II aminoacyl-tRNA synthetase family. Type-1 seryl-tRNA synthetase subfamily. As to quaternary structure, homodimer. The tRNA molecule binds across the dimer.

The protein resides in the cytoplasm. The catalysed reaction is tRNA(Ser) + L-serine + ATP = L-seryl-tRNA(Ser) + AMP + diphosphate + H(+). It catalyses the reaction tRNA(Sec) + L-serine + ATP = L-seryl-tRNA(Sec) + AMP + diphosphate + H(+). Its pathway is aminoacyl-tRNA biosynthesis; selenocysteinyl-tRNA(Sec) biosynthesis; L-seryl-tRNA(Sec) from L-serine and tRNA(Sec): step 1/1. In terms of biological role, catalyzes the attachment of serine to tRNA(Ser). Is also able to aminoacylate tRNA(Sec) with serine, to form the misacylated tRNA L-seryl-tRNA(Sec), which will be further converted into selenocysteinyl-tRNA(Sec). The sequence is that of Serine--tRNA ligase from Delftia acidovorans (strain DSM 14801 / SPH-1).